A 515-amino-acid polypeptide reads, in one-letter code: Fibril protein (515 aa).

Position 1 is a blocked amino end (Met) (Met-1). Helical regions lie at residues 21 to 34 (VKKY…IQHV), 206 to 228 (HKFK…FNLL), 357 to 376 (KIET…AEKC), and 426 to 440 (SNEF…LKDV).

The protein localises to the cytoplasm. It localises to the cytoskeleton. In terms of biological role, acts as a cytoskeletal structure involved in the shape and motility of spiroplasmas. The chain is Fibril protein from Spiroplasma citri.